Consider the following 838-residue polypeptide: DNA gyrase subunit A (838 aa).

Thr2 carries the N-acetylthreonine modification. The Topo IIA-type catalytic domain occupies 41 to 510; the sequence is LPEVRDGLKP…ADGDVSDEDL (470 aa). Tyr129 serves as the catalytic O-(5'-phospho-DNA)-tyrosine intermediate. Positions 504, 506, 508, and 515 each coordinate Ca(2+). The 13-residue stretch at 504–516 folds into the EF-hand domain; the sequence is DVSDEDLIAREDV. The C-terminal domain CTD stretch occupies residues 514–838; sequence EDVVVTITET…DANGADQTGN (325 aa). A GyrA-box motif is present at residues 537 to 543; it reads QKRGGKG. Residues 743-749 carry the GyrA-box-1 motif; that stretch reads QGRGGKG.

The protein belongs to the type II topoisomerase GyrA/ParC subunit family. Heterotetramer, composed of two GyrA and two GyrB chains. In the heterotetramer, GyrA contains the active site tyrosine that forms a transient covalent intermediate with DNA, while GyrB binds cofactors and catalyzes ATP hydrolysis. Ca(2+) is required as a cofactor.

The protein resides in the cytoplasm. It carries out the reaction ATP-dependent breakage, passage and rejoining of double-stranded DNA.. With respect to regulation, DNA supercoiling inhibited by (fluoro)quinoline antibiotics such as sparfloxacin and levofloxacin, which usually act on GyrA. DNA supercoiling inhibited by the coumarin antibiotic novobiocin which acts on GyrB. Quinolones lead to gyrase-mediated dsDNA cleavage while preventing reclosure. DNA supercoiling activity inhibited by aminopyrazinamide and pyrrolamide derivatives, probably via effects on the GyrB subunit. DNA relaxation inhibited by ATP and its analogs. DNA supercoiling, relaxation, decatenation and quinolone-promoted DNA cleavage are inhibited by MfpA (50% inhibition occurs at 2 uM), inhibition of gyrase activities is enhanced in a concentration-dependent manner by MfpA. Its function is as follows. A type II topoisomerase that negatively supercoils closed circular double-stranded (ds) DNA in an ATP-dependent manner to maintain chromosomes in an underwound state, while in the absence of ATP it relaxes supercoiled dsDNA. Also catalyzes the interconversion of other topological isomers of dsDNA rings, including catenanes. Gyrase from M.tuberculosis has higher decatenation than supercoiling activity compared to E.coli; as M.tuberculosis only has 1 type II topoisomerase, gyrase has to fulfill the decatenation function of topoisomerase IV as well. At comparable concentrations M.tuberculosis gyrase cannot introduce as many negative supercoils into DNA as the E.coli enzyme, and its ATPase activity is lower, perhaps because it does not couple DNA wrapping and ATP binding as well as E.coli. Functionally, negative supercoiling favors strand separation, and DNA replication, transcription, recombination and repair, all of which involve strand separation. Type II topoisomerases break and join 2 DNA strands simultaneously in an ATP-dependent manner. In Mycobacterium tuberculosis (strain ATCC 25618 / H37Rv), this protein is DNA gyrase subunit A.